We begin with the raw amino-acid sequence, 196 residues long: FMN-dependent NADH:quinone oxidoreductase (196 aa).

FMN-binding positions include Ser10 and 17-19 (SYS).

This sequence belongs to the azoreductase type 1 family. Homodimer. Requires FMN as cofactor.

It catalyses the reaction 2 a quinone + NADH + H(+) = 2 a 1,4-benzosemiquinone + NAD(+). The catalysed reaction is N,N-dimethyl-1,4-phenylenediamine + anthranilate + 2 NAD(+) = 2-(4-dimethylaminophenyl)diazenylbenzoate + 2 NADH + 2 H(+). Quinone reductase that provides resistance to thiol-specific stress caused by electrophilic quinones. Functionally, also exhibits azoreductase activity. Catalyzes the reductive cleavage of the azo bond in aromatic azo compounds to the corresponding amines. The sequence is that of FMN-dependent NADH:quinone oxidoreductase from Metamycoplasma arthritidis (strain 158L3-1) (Mycoplasma arthritidis).